Reading from the N-terminus, the 273-residue chain is WIMGHMVDAIAQIDEFVSLGANSIETDVSFDKNANPEYTYHGIPCDCGRTCTKWEYFNTFLGGLRKATTPGDSKYHEKLVLVVFDLKTGSLYDNQAYDAGTKLAKSLLQNYWNKGNNGGRACIVLSIPNLDHYKLITGFKETLTKEEHPELMDKVGYDFSGNDDIGDVAKAYKKAGVTGHVWQSDGITNCLLRGLDRVRKAVANRDSSNGYINKVYYWTVDKRASTRDALDAGVDGIMTNYPDVIADVLSESAYTAKFRIATYDDNPWETFKN.

Residue histidine 5 is part of the active site. Residues glutamate 25 and aspartate 27 each contribute to the Mg(2+) site. Histidine 41 serves as the catalytic Nucleophile. 2 disulfide bridges follow: cysteine 45–cysteine 51 and cysteine 47–cysteine 190. Residue aspartate 85 coordinates Mg(2+).

This sequence belongs to the arthropod phospholipase D family. Class II subfamily. It depends on Mg(2+) as a cofactor. Expressed by the venom gland.

The protein localises to the secreted. It carries out the reaction an N-(acyl)-sphingosylphosphocholine = an N-(acyl)-sphingosyl-1,3-cyclic phosphate + choline. It catalyses the reaction an N-(acyl)-sphingosylphosphoethanolamine = an N-(acyl)-sphingosyl-1,3-cyclic phosphate + ethanolamine. The catalysed reaction is a 1-acyl-sn-glycero-3-phosphocholine = a 1-acyl-sn-glycero-2,3-cyclic phosphate + choline. The enzyme catalyses a 1-acyl-sn-glycero-3-phosphoethanolamine = a 1-acyl-sn-glycero-2,3-cyclic phosphate + ethanolamine. Functionally, dermonecrotic toxins cleave the phosphodiester linkage between the phosphate and headgroup of certain phospholipids (sphingolipid and lysolipid substrates), forming an alcohol (often choline) and a cyclic phosphate. This toxin acts on sphingomyelin (SM). It may also act on ceramide phosphoethanolamine (CPE), lysophosphatidylcholine (LPC) and lysophosphatidylethanolamine (LPE), but not on lysophosphatidylserine (LPS), and lysophosphatidylglycerol (LPG). It acts by transphosphatidylation, releasing exclusively cyclic phosphate products as second products. Induces dermonecrosis, hemolysis, increased vascular permeability, edema, inflammatory response, and platelet aggregation. This Loxosceles sabina (Tucson recluse spider) protein is Dermonecrotic toxin LsaSicTox-alphaIB1bii.